Consider the following 153-residue polypeptide: SsrA-binding protein (153 aa).

The tract at residues 132–153 (REKDWLRERERVMKHDTRRRSD) is disordered.

This sequence belongs to the SmpB family.

It is found in the cytoplasm. In terms of biological role, required for rescue of stalled ribosomes mediated by trans-translation. Binds to transfer-messenger RNA (tmRNA), required for stable association of tmRNA with ribosomes. tmRNA and SmpB together mimic tRNA shape, replacing the anticodon stem-loop with SmpB. tmRNA is encoded by the ssrA gene; the 2 termini fold to resemble tRNA(Ala) and it encodes a 'tag peptide', a short internal open reading frame. During trans-translation Ala-aminoacylated tmRNA acts like a tRNA, entering the A-site of stalled ribosomes, displacing the stalled mRNA. The ribosome then switches to translate the ORF on the tmRNA; the nascent peptide is terminated with the 'tag peptide' encoded by the tmRNA and targeted for degradation. The ribosome is freed to recommence translation, which seems to be the essential function of trans-translation. The chain is SsrA-binding protein from Bordetella avium (strain 197N).